The primary structure comprises 339 residues: D-erythrose-4-phosphate dehydrogenase (339 aa).

11–12 (RI) contacts NAD(+). Substrate contacts are provided by residues 153 to 155 (SCT), arginine 199, 212 to 213 (TK), and arginine 235. Residue cysteine 154 is the Nucleophile of the active site. NAD(+) is bound at residue asparagine 317.

It belongs to the glyceraldehyde-3-phosphate dehydrogenase family. Epd subfamily. In terms of assembly, homotetramer.

Its subcellular location is the cytoplasm. The catalysed reaction is D-erythrose 4-phosphate + NAD(+) + H2O = 4-phospho-D-erythronate + NADH + 2 H(+). It participates in cofactor biosynthesis; pyridoxine 5'-phosphate biosynthesis; pyridoxine 5'-phosphate from D-erythrose 4-phosphate: step 1/5. Functionally, catalyzes the NAD-dependent conversion of D-erythrose 4-phosphate to 4-phosphoerythronate. This Shewanella pealeana (strain ATCC 700345 / ANG-SQ1) protein is D-erythrose-4-phosphate dehydrogenase.